We begin with the raw amino-acid sequence, 427 residues long: MAENGDKEQLDLDTKICEQIEYYFGDHNLPRDKFLKQQVLLDNGWVPLETMIKFNRLSKLTTDFNIILQALKKSKTELLEINEEKCKIRRSPAKPLPELNEDYKNSFKHRSVYIKGFPTITNLDEIKEWLNDKGPIENIQMRRTLQREFKGSVFLVFNTEDGAKKFLEDKNLKYKDNDMIILSREEYFAKKNEERKLNKSEEKAKSKQEKEEAQKQAEDAERKLMEERVGCLLKFSGDLDNMTSREDLHALFQTHGEIEWIDFSRGAKEGIVLFKMNAKEALDKAKAANNDNLKLKGKNVKWELIEGDAEKEALKKIMEGKQESFNKRKGRDGRKFKGKGRGGKGNDSSPRKKIQFQGKKKTFDSSDDEDDMEESESPQKVTIKAKETAGPKNGASAAPGSPKKRALDDKAEDGPAVKQSKTEVGDQ.

The region spanning 6–98 (DKEQLDLDTK…RRSPAKPLPE (93 aa)) is the HTH La-type RNA-binding domain. The region spanning 110 to 202 (RSVYIKGFPT…EERKLNKSEE (93 aa)) is the RRM domain. Disordered regions lie at residues 193–220 (EERKLNKSEEKAKSKQEKEEAQKQAEDA) and 319–427 (EGKQ…VGDQ). A xRRM domain is found at 226–348 (EERVGCLLKF…KGRGGKGNDS (123 aa)). A Nuclear localization signal motif is present at residues 315–331 (KKIMEGKQESFNKRKGR). Basic residues-rich tracts occupy residues 327–342 (KRKGRDGRKFKGKGRG) and 351–360 (RKKIQFQGKK). Over residues 365-376 (SSDDEDDMEESE) the composition is skewed to acidic residues. A compositionally biased stretch (basic and acidic residues) spans 405–427 (RALDDKAEDGPAVKQSKTEVGDQ).

In terms of processing, phosphorylated.

Its subcellular location is the nucleus. In terms of biological role, la protein plays a role in the transcription of RNA polymerase III. It is most probably a transcription termination factor. Binds to the 3' termini of virtually all nascent polymerase III transcripts. This Xenopus laevis (African clawed frog) protein is Lupus La protein homolog B (ssb-b).